A 279-amino-acid polypeptide reads, in one-letter code: Digeranylgeranylglyceryl phosphate synthase (279 aa).

8 helical membrane passes run 5 to 25 (GFFAITRPANSVVAGLAAIVA), 27 to 47 (LIATGTLVYGVLLLMAVVLLV), 90 to 110 (FLLGLAVSVFTTPLCMGIALV), 127 to 147 (FFGNAAVAFLSASIFLFGGAY), 148 to 168 (AGWHALLDMLPIAAITFLAML), 198 to 218 (KTALIAFACTAFAIAASAVPY), 219 to 239 (LWWGGWYLAGIAAVDLVILFA), and 259 to 279 (TLLKLGMFASLVVFTLSAVFL).

The protein belongs to the UbiA prenyltransferase family. DGGGP synthase subfamily. Mg(2+) serves as cofactor.

It localises to the cell membrane. The catalysed reaction is sn-3-O-(geranylgeranyl)glycerol 1-phosphate + (2E,6E,10E)-geranylgeranyl diphosphate = 2,3-bis-O-(geranylgeranyl)-sn-glycerol 1-phosphate + diphosphate. It functions in the pathway membrane lipid metabolism; glycerophospholipid metabolism. Prenyltransferase that catalyzes the transfer of the geranylgeranyl moiety of geranylgeranyl diphosphate (GGPP) to the C2 hydroxyl of (S)-3-O-geranylgeranylglyceryl phosphate (GGGP). This reaction is the second ether-bond-formation step in the biosynthesis of archaeal membrane lipids. The chain is Digeranylgeranylglyceryl phosphate synthase from Methanoregula boonei (strain DSM 21154 / JCM 14090 / 6A8).